Here is a 292-residue protein sequence, read N- to C-terminus: MQELIKRTLPQDDALNQAIVNELRSQNWAGFLNYSQVQQLCHNFELTPLKLAMHLLPLAASYSHTAISHFNVGAIAIGEQGDFYFGANQEFANSAIQQTIHAEQSAISHAWLRNERRISDMVVNYTPCGHCRQFMNELHGAEKISIHLPHSQNNPLHSYLPDAFGPKDLDIAAHLLADENHDLIADHQDDLINQAILAANQSHCPYSNSPHGIAILFKNGDMVTGRYAENAAFNPSLPALQTALNFAYLNDKKLSDIERIVMAEKALKLSHKTMAETLLSTLTSVELEYYSL.

CMP/dCMP-type deaminase domains lie at 47–167 (TPLK…FGPK) and 186–292 (DHQD…YYSL). A substrate-binding site is contributed by 88–90 (NQE). H101 provides a ligand contact to Zn(2+). The active-site Proton donor is the E103. The Zn(2+) site is built by C128 and C131.

The protein belongs to the cytidine and deoxycytidylate deaminase family. Homodimer. Zn(2+) serves as cofactor.

It carries out the reaction cytidine + H2O + H(+) = uridine + NH4(+). It catalyses the reaction 2'-deoxycytidine + H2O + H(+) = 2'-deoxyuridine + NH4(+). In terms of biological role, this enzyme scavenges exogenous and endogenous cytidine and 2'-deoxycytidine for UMP synthesis. This Haemophilus influenzae (strain PittEE) protein is Cytidine deaminase.